The primary structure comprises 324 residues: tRNA N6-adenosine threonylcarbamoyltransferase (324 aa).

Fe cation-binding residues include H107, H111, and Y127. Residues 127 to 131 (YVSGG), D159, G172, E176, and N257 contribute to the substrate site. Residue D285 participates in Fe cation binding.

Belongs to the KAE1 / TsaD family. In terms of assembly, monomer. Component of the KEOPS complex that consists of Kae1, Bud32, Cgi121 and Pcc1; the whole complex dimerizes. Requires Fe(2+) as cofactor.

The protein resides in the cytoplasm. The catalysed reaction is L-threonylcarbamoyladenylate + adenosine(37) in tRNA = N(6)-L-threonylcarbamoyladenosine(37) in tRNA + AMP + H(+). Required for the formation of a threonylcarbamoyl group on adenosine at position 37 (t(6)A37) in tRNAs that read codons beginning with adenine. Is a component of the KEOPS complex that is probably involved in the transfer of the threonylcarbamoyl moiety of threonylcarbamoyl-AMP (TC-AMP) to the N6 group of A37. Kae1 likely plays a direct catalytic role in this reaction, but requires other protein(s) of the complex to fulfill this activity. This chain is tRNA N6-adenosine threonylcarbamoyltransferase, found in Pyrococcus furiosus (strain ATCC 43587 / DSM 3638 / JCM 8422 / Vc1).